A 182-amino-acid chain; its full sequence is tRNA-splicing endonuclease (182 aa).

Active-site residues include Y119, H127, and K158.

The protein belongs to the tRNA-intron endonuclease family. Archaeal short subfamily. In terms of assembly, homotetramer; although the tetramer contains four active sites, only two participate in the cleavage. Therefore, it should be considered as a dimer of dimers.

It carries out the reaction pretRNA = a 3'-half-tRNA molecule with a 5'-OH end + a 5'-half-tRNA molecule with a 2',3'-cyclic phosphate end + an intron with a 2',3'-cyclic phosphate and a 5'-hydroxyl terminus.. Endonuclease that removes tRNA introns. Cleaves pre-tRNA at the 5'- and 3'-splice sites to release the intron. The products are an intron and two tRNA half-molecules bearing 2',3' cyclic phosphate and 5'-OH termini. Recognizes a pseudosymmetric substrate in which 2 bulged loops of 3 bases are separated by a stem of 4 bp. This chain is tRNA-splicing endonuclease, found in Saccharolobus islandicus (strain Y.N.15.51 / Yellowstone #2) (Sulfolobus islandicus).